A 186-amino-acid chain; its full sequence is uncharacterized protein (186 aa).

The first 18 residues, 1–18 (MNKFLFAAALIVSGLLVG), serve as a signal peptide directing secretion. C19 is lipidated: N-palmitoyl cysteine. C19 carries the S-diacylglycerol cysteine lipid modification.

Its subcellular location is the cell membrane. This is an uncharacterized protein from Escherichia coli (strain K12).